Reading from the N-terminus, the 469-residue chain is ATP synthase subunit beta (469 aa).

Residue 156–163 (GGAGVGKT) participates in ATP binding.

Belongs to the ATPase alpha/beta chains family. As to quaternary structure, F-type ATPases have 2 components, CF(1) - the catalytic core - and CF(0) - the membrane proton channel. CF(1) has five subunits: alpha(3), beta(3), gamma(1), delta(1), epsilon(1). CF(0) has three main subunits: a(1), b(2) and c(9-12). The alpha and beta chains form an alternating ring which encloses part of the gamma chain. CF(1) is attached to CF(0) by a central stalk formed by the gamma and epsilon chains, while a peripheral stalk is formed by the delta and b chains.

Its subcellular location is the cell membrane. The enzyme catalyses ATP + H2O + 4 H(+)(in) = ADP + phosphate + 5 H(+)(out). Produces ATP from ADP in the presence of a proton gradient across the membrane. The catalytic sites are hosted primarily by the beta subunits. This is ATP synthase subunit beta from Lactococcus lactis subsp. lactis (strain IL1403) (Streptococcus lactis).